The following is a 353-amino-acid chain: tRNA N6-adenosine threonylcarbamoyltransferase (353 aa).

Fe cation is bound by residues H109 and H113. Residues 136–140, D169, G182, D186, and N284 contribute to the substrate site; that span reads TVSGG. A Fe cation-binding site is contributed by D312.

The protein belongs to the KAE1 / TsaD family. Requires Fe(2+) as cofactor.

It localises to the cytoplasm. The catalysed reaction is L-threonylcarbamoyladenylate + adenosine(37) in tRNA = N(6)-L-threonylcarbamoyladenosine(37) in tRNA + AMP + H(+). Functionally, required for the formation of a threonylcarbamoyl group on adenosine at position 37 (t(6)A37) in tRNAs that read codons beginning with adenine. Is involved in the transfer of the threonylcarbamoyl moiety of threonylcarbamoyl-AMP (TC-AMP) to the N6 group of A37, together with TsaE and TsaB. TsaD likely plays a direct catalytic role in this reaction. The chain is tRNA N6-adenosine threonylcarbamoyltransferase from Chlorobaculum tepidum (strain ATCC 49652 / DSM 12025 / NBRC 103806 / TLS) (Chlorobium tepidum).